A 359-amino-acid polypeptide reads, in one-letter code: CCAAT/enhancer-binding protein alpha (359 aa).

Residues 1–55 (MESADFYEVEPRPPMSSHLQSPPHAPSNAAFGFPRGAGPAPPPAPPAAPEPLGGI) are disordered. The required to repress E2F1:TFDP1-mediated transcription, to inhibit cell cycle and to induce adipocyte differentiation stretch occupies residues 1 to 70 (MESADFYEVE…SIDISAYIDP (70 aa)). A compositionally biased stretch (low complexity) spans 29-38 (AAFGFPRGAG). The span at 39–49 (PAPPPAPPAAP) shows a compositional bias: pro residues. A required for interaction with TRIB1 region spans residues 54 to 72 (GICEHETSIDISAYIDPAA). The segment at 126 to 200 (PPGYGCAAAG…HASPAHLAAP (75 aa)) is required to induce adipocyte differentiation. Lysine 159 is subject to N6-acetyllysine; alternate. Lysine 159 is covalently cross-linked (Glycyl lysine isopeptide (Lys-Gly) (interchain with G-Cter in SUMO); alternate). Residue lysine 159 forms a Glycyl lysine isopeptide (Lys-Gly) (interchain with G-Cter in SUMO2); alternate linkage. Disordered regions lie at residues 176 to 195 (LFPY…ASPA) and 213 to 293 (TMHL…RERN). Positions 179–191 (YQPPPPPPPPHPH) are enriched in pro residues. Residues 180-194 (QPPPPPPPPHPHASP) form a required to functionally cooperate with SREBF1 in promoter activation region. Serine 193 bears the Phosphoserine mark. The segment covering 220-232 (HPTPPPTPVPSPH) has biased composition (pro residues). Residues threonine 222 and threonine 226 each carry the phosphothreonine; by GSK3 modification. Serine 230 carries the post-translational modification Phosphoserine; by GSK3. The segment covering 233 to 255 (AAPALGAAGLPGPGSALKGLAGA) has biased composition (low complexity). The interval 240–359 (AGLPGPGSAL…SLVKAMGNCA (120 aa)) is interaction with FOXO1. Positions 261-272 (TGGGGGGSGAGA) are enriched in gly residues. The segment covering 277-293 (KSVDKNSNEYRVRRERN) has biased composition (basic and acidic residues). Residues 283 to 346 (SNEYRVRRER…DTLRGIFRQL (64 aa)) enclose the bZIP domain. A DNA-binding region spans residues 286-301 (YRVRRERNNIAVRKSR). Residues 287–314 (RVRRERNNIAVRKSRDKAKQRNVETQQK) form a basic motif region. The interval 318–346 (LTSDNDRLRKRVEQLSRELDTLRGIFRQL) is leucine-zipper.

The protein belongs to the bZIP family. C/EBP subfamily. Binds DNA as a homodimer and as a heterodimer. Can form stable heterodimers with CEBPB, CEBPD, CEBPE and CEBPG. Interacts with PRDM16. Interacts with UBN1. Interacts with ZNF638; this interaction increases transcriptional activation. Interacts with the complex TFDP2:E2F1; the interaction prevents CEBPA binding to target gene promoters and represses its transcriptional activity. Interacts with RB1. Interacts (when phosphorylated at Ser-193) with CDK2, CDK4, E2F4 and SMARCA2. Interacts with SREBPF1. Interacts with FOXO1 (via the Fork-head domain); the interaction increases when FOXO1 is deacetylated. Interacts with SIX1. Interacts (via recognition sequence) with TRIB1. Interacts (via bZIP domain) with OVOL2 (via zinc-finger domains); the interaction inhibits the transcription factor activity of CEBPA and is required to repress adipogenesis. In terms of assembly, interacts with TAF1A and UBTF. As to quaternary structure, interacts with TAF1A and UBTF. Interacts with NPM1. Post-translationally, sumoylated, sumoylation blocks the inhibitory effect on cell proliferation by disrupting the interaction with SMARCA2. In terms of processing, phosphorylation at Ser-193 is required for interaction with CDK2, CDK4 and SWI/SNF complex leading to cell cycle inhibition. Dephosphorylated at Ser-193 by protein phosphatase 2A (PP2A) through PI3K/AKT signaling pathway regulation. Phosphorylation at Thr-222 and Thr-226 by GSK3 is constitutive in adipose tissue and lung. In liver, both Thr-222 and Thr-226 are phosphorylated only during feeding but not during fasting. Phosphorylation of the GSK3 consensus sites selectively decreases transactivation activity on IRE-controlled promoters. Ubiquitinated by COP1 upon interaction with TRIB1. Isoform 2 and isoform 3 are expressed in adipose tissue and liver (at protein level).

It is found in the nucleus. It localises to the nucleolus. Its function is as follows. Transcription factor that coordinates proliferation arrest and the differentiation of myeloid progenitors, adipocytes, hepatocytes, and cells of the lung and the placenta. Binds directly to the consensus DNA sequence 5'-T[TG]NNGNAA[TG]-3' acting as an activator on distinct target genes. During early embryogenesis, plays essential and redundant functions with CEBPB. Essential for the transition from common myeloid progenitors (CMP) to granulocyte/monocyte progenitors (GMP). Critical for the proper development of the liver and the lung. Necessary for terminal adipocyte differentiation, is required for postnatal maintenance of systemic energy homeostasis and lipid storage. To regulate these different processes at the proper moment and tissue, interplays with other transcription factors and modulators. Down-regulates the expression of genes that maintain cells in an undifferentiated and proliferative state through E2F1 repression, which is critical for its ability to induce adipocyte and granulocyte terminal differentiation. Reciprocally E2F1 blocks adipocyte differentiation by binding to specific promoters and repressing CEBPA binding to its target gene promoters. Proliferation arrest also depends on a functional binding to SWI/SNF complex. In liver, regulates gluconeogenesis and lipogenesis through different mechanisms. To regulate gluconeogenesis, functionally cooperates with FOXO1 binding to IRE-controlled promoters and regulating the expression of target genes such as PCK1 or G6PC1. To modulate lipogenesis, interacts and transcriptionally synergizes with SREBF1 in promoter activation of specific lipogenic target genes such as ACAS2. In adipose tissue, seems to act as FOXO1 coactivator accessing to ADIPOQ promoter through FOXO1 binding sites. Can act as dominant-negative. Binds DNA and have transctivation activity, even if much less efficiently than isoform 2. Does not inhibit cell proliferation. In terms of biological role, directly and specifically enhances ribosomal DNA transcription interacting with RNA polymerase I-specific cofactors and inducing histone acetylation. The polypeptide is CCAAT/enhancer-binding protein alpha (Mus musculus (Mouse)).